The following is a 157-amino-acid chain: Eukaryotic translation initiation factor 5A-2 (157 aa).

An N-acetylserine modification is found at S2. At S2 the chain carries Phosphoserine. Residue T7 is modified to Phosphothreonine. The residue at position 51 (K51) is a Hypusine. Phosphoserine is present on S74. A Glycyl lysine isopeptide (Lys-Gly) (interchain with G-Cter in ubiquitin) cross-link involves residue K86.

The protein belongs to the eIF-5A family. Homodimer. Binds to 80S ribosomes. Actively translating ribosomes show mutually exclusive binding of eIF5a (HYP2 or ANB1) and EFT1/eEF2. Interacts with DYS1 and LIA1. Lys-51 undergoes hypusination, a unique post-translational modification that consists in the addition of a butylamino group from spermidine to lysine side chain, leading to the formation of the unusual amino acid hypusine. eIF-5As are the only known proteins to undergo this modification, which is essential for their function.

Its subcellular location is the cytoplasm. Its function is as follows. Translation factor that promotes translation elongation and termination, particularly upon ribosome stalling at specific amino acid sequence contexts. Binds between the exit (E) and peptidyl (P) site of the ribosome and promotes rescue of stalled ribosome: specifically required for efficient translation of polyproline-containing peptides as well as other motifs that stall the ribosome. Acts as ribosome quality control (RQC) cofactor by joining the RQC complex to facilitate peptidyl transfer during CAT tailing step. Involved in actin dynamics and cell cycle progression, mRNA decay and probably in a pathway involved in stress response and maintenance of cell wall integrity. This Saccharomyces cerevisiae (strain ATCC 204508 / S288c) (Baker's yeast) protein is Eukaryotic translation initiation factor 5A-2 (ANB1).